A 417-amino-acid polypeptide reads, in one-letter code: MEFDTIPQEAMWQMNLRSSETMESGPYPEHPGEPDCSYYIRTGLCRFGATCRFNHPPNRKLAIATARMKGEFPERLGQPECQYYLKTGTCKFGATCRFHHPKDKAGVAGRVALNILGYPLRPNESERAYYLRTGQCKFGNTCKFHHPQPSNMVLSMRGSTVYPTVQSPTTPGQQSYAAGITNWSSSSYVPSPRWQGPSSYAPLILPQGVVSVPGWSTYGGQMGSESPQQTMRNDQTYGTSHQGELENAGLQGAYSQYRSGSVPVGFYALQRDNIFPERPDQPECQFYMKTGDCKFGAVCRFHHPRERQIPAPDCVLSPIGLPLRPGEPLCVFYSRYGICKFGPSCKFDHPMGIFTYNVASPLADTPGRRLLGSSSGTAALSLSSEGLVESGTAKPRRLSLSETRPIPPGDDNIDDEG.

2 C3H1-type zinc fingers span residues Pro31–Asn58 and Arg75–Asp103. The C3H1-type 3; degenerate zinc-finger motif lies at Arg121–Pro149. 2 C3H1-type zinc fingers span residues Arg278–Glu306 and Arg324–Gly352. Positions Ser383–Gly417 are disordered.

It localises to the nucleus. This is Zinc finger CCCH domain-containing protein ZFN-like from Pisum sativum (Garden pea).